Here is a 513-residue protein sequence, read N- to C-terminus: ATP synthase subunit alpha (513 aa).

ATP is bound at residue 169–176 (GDRQIGKT).

It belongs to the ATPase alpha/beta chains family. As to quaternary structure, F-type ATPases have 2 components, CF(1) - the catalytic core - and CF(0) - the membrane proton channel. CF(1) has five subunits: alpha(3), beta(3), gamma(1), delta(1), epsilon(1). CF(0) has three main subunits: a(1), b(2) and c(9-12). The alpha and beta chains form an alternating ring which encloses part of the gamma chain. CF(1) is attached to CF(0) by a central stalk formed by the gamma and epsilon chains, while a peripheral stalk is formed by the delta and b chains.

The protein resides in the cell inner membrane. The catalysed reaction is ATP + H2O + 4 H(+)(in) = ADP + phosphate + 5 H(+)(out). Functionally, produces ATP from ADP in the presence of a proton gradient across the membrane. The alpha chain is a regulatory subunit. The chain is ATP synthase subunit alpha from Shewanella piezotolerans (strain WP3 / JCM 13877).